Reading from the N-terminus, the 130-residue chain is Large ribosomal subunit protein bL21 (130 aa).

It belongs to the bacterial ribosomal protein bL21 family. As to quaternary structure, part of the 50S ribosomal subunit. Contacts protein L20.

Functionally, this protein binds to 23S rRNA in the presence of protein L20. This is Large ribosomal subunit protein bL21 from Trichormus variabilis (strain ATCC 29413 / PCC 7937) (Anabaena variabilis).